The chain runs to 573 residues: Estrogen receptor beta (573 aa).

The modulating stretch occupies residues 15-170; sequence QEVDSSKVGE…CFAGKGDMHF (156 aa). 2 NR C4-type zinc fingers span residues 171-191 and 207-231; these read CAVC…CEGC and CPAT…LRKC. A DNA-binding region (nuclear receptor) is located at residues 171–236; that stretch reads CAVCHDYASG…RLRKCYEVGM (66 aa). Residues 291–527 enclose the NR LBD domain; sequence TPEQLINRII…DLLLEMLDAN (237 aa). Low complexity-rich tracts occupy residues 534-552 and 559-573; these read MSAS…AQSQ and CSGE…SSTI. Residues 534 to 573 form a disordered region; it reads MSASYSSQPSPWSQAAQSQPGPPPSCSGECPCPPKESSTI.

It belongs to the nuclear hormone receptor family. NR3 subfamily. Binds DNA as a homodimer. Can form a heterodimer with ER-alpha. In terms of tissue distribution, liver.

Its subcellular location is the nucleus. In terms of biological role, binds estrogens with an affinity similar to that of ER-alpha, and activates expression of reporter genes containing estrogen response elements (ERE) in an estrogen-dependent manner. This is Estrogen receptor beta (esr2) from Anguilla japonica (Japanese eel).